The chain runs to 227 residues: Large ribosomal subunit protein uL3 (227 aa).

At Gln-154 the chain carries N5-methylglutamine.

It belongs to the universal ribosomal protein uL3 family. As to quaternary structure, part of the 50S ribosomal subunit. Forms a cluster with proteins L14 and L19. Post-translationally, methylated by PrmB.

One of the primary rRNA binding proteins, it binds directly near the 3'-end of the 23S rRNA, where it nucleates assembly of the 50S subunit. The polypeptide is Large ribosomal subunit protein uL3 (Acidiphilium cryptum (strain JF-5)).